The primary structure comprises 367 residues: Histidinol-phosphate aminotransferase (367 aa).

K230 bears the N6-(pyridoxal phosphate)lysine mark.

Belongs to the class-II pyridoxal-phosphate-dependent aminotransferase family. Histidinol-phosphate aminotransferase subfamily. In terms of assembly, homodimer. It depends on pyridoxal 5'-phosphate as a cofactor.

The enzyme catalyses L-histidinol phosphate + 2-oxoglutarate = 3-(imidazol-4-yl)-2-oxopropyl phosphate + L-glutamate. It functions in the pathway amino-acid biosynthesis; L-histidine biosynthesis; L-histidine from 5-phospho-alpha-D-ribose 1-diphosphate: step 7/9. This is Histidinol-phosphate aminotransferase from Thermobifida fusca (strain YX).